The following is a 328-amino-acid chain: D-cysteine desulfhydrase (328 aa).

Position 51 is an N6-(pyridoxal phosphate)lysine (K51).

It belongs to the ACC deaminase/D-cysteine desulfhydrase family. Homodimer. Pyridoxal 5'-phosphate serves as cofactor.

The catalysed reaction is D-cysteine + H2O = hydrogen sulfide + pyruvate + NH4(+) + H(+). In terms of biological role, catalyzes the alpha,beta-elimination reaction of D-cysteine and of several D-cysteine derivatives. It could be a defense mechanism against D-cysteine. The sequence is that of D-cysteine desulfhydrase from Salmonella paratyphi C (strain RKS4594).